The chain runs to 156 residues: Small ribosomal subunit protein uS7 (156 aa).

It belongs to the universal ribosomal protein uS7 family. In terms of assembly, part of the 30S ribosomal subunit. Contacts proteins S9 and S11.

Its function is as follows. One of the primary rRNA binding proteins, it binds directly to 16S rRNA where it nucleates assembly of the head domain of the 30S subunit. Is located at the subunit interface close to the decoding center, probably blocks exit of the E-site tRNA. The chain is Small ribosomal subunit protein uS7 from Streptococcus uberis (strain ATCC BAA-854 / 0140J).